A 44-amino-acid chain; its full sequence is Protein PsbN (44 aa).

The helical transmembrane segment at 6–26 threads the bilayer; the sequence is FFFTIFLWCLLLSVTGYSVYV.

The protein belongs to the PsbN family.

It localises to the plastid. The protein resides in the chloroplast thylakoid membrane. Functionally, may play a role in photosystem I and II biogenesis. The sequence is that of Protein PsbN from Oltmannsiellopsis viridis (Marine flagellate).